Reading from the N-terminus, the 88-residue chain is Small ribosomal subunit protein bS18 (88 aa).

The disordered stretch occupies residues 1–22; that stretch reads MSTKNAKPKKEAQRRPSRKAKV.

The protein belongs to the bacterial ribosomal protein bS18 family. As to quaternary structure, part of the 30S ribosomal subunit. Forms a tight heterodimer with protein bS6.

Its function is as follows. Binds as a heterodimer with protein bS6 to the central domain of the 16S rRNA, where it helps stabilize the platform of the 30S subunit. This chain is Small ribosomal subunit protein bS18 (rpsR), found in Thermus thermophilus (strain ATCC BAA-163 / DSM 7039 / HB27).